The following is a 504-amino-acid chain: 26S proteasome non-ATPase regulatory subunit 5 (504 aa).

The residue at position 2 (Ala-2) is an N-acetylalanine.

Belongs to the proteasome subunit S5B/HSM3 family. As to quaternary structure, interacts with PSMC1, PSMC2, PSMD1 and PSMD6. Part of transient complex containing PSMD5, PSMC2, PSMC1 and PSMD2 formed during the assembly of the 26S proteasome.

Acts as a chaperone during the assembly of the 26S proteasome, specifically of the base subcomplex of the PA700/19S regulatory complex (RC). In the initial step of the base subcomplex assembly is part of an intermediate PSMD5:PSMC2:PSMC1:PSMD2 module which probably assembles with a PSMD10:PSMC4:PSMC5:PAAF1 module followed by dissociation of PSMD5. This Homo sapiens (Human) protein is 26S proteasome non-ATPase regulatory subunit 5 (PSMD5).